The chain runs to 661 residues: UvrABC system protein B (661 aa).

Positions 26 to 413 (KGIQEGKKHQ…TDEMVEQIIR (388 aa)) constitute a Helicase ATP-binding domain. 39 to 46 (GATGTGKT) provides a ligand contact to ATP. Residues 92 to 115 (YYDYYQPEAYVPQTDTFIEKDASI) carry the Beta-hairpin motif. One can recognise a Helicase C-terminal domain in the interval 430 to 596 (QIDDLIGEIQ…TINKEIRDVI (167 aa)). The region spanning 625-660 (QKVVEQMEHEMKEAAKALDFERAAELRDLLLELKAE) is the UVR domain.

Belongs to the UvrB family. Forms a heterotetramer with UvrA during the search for lesions. Interacts with UvrC in an incision complex.

It localises to the cytoplasm. In terms of biological role, the UvrABC repair system catalyzes the recognition and processing of DNA lesions. A damage recognition complex composed of 2 UvrA and 2 UvrB subunits scans DNA for abnormalities. Upon binding of the UvrA(2)B(2) complex to a putative damaged site, the DNA wraps around one UvrB monomer. DNA wrap is dependent on ATP binding by UvrB and probably causes local melting of the DNA helix, facilitating insertion of UvrB beta-hairpin between the DNA strands. Then UvrB probes one DNA strand for the presence of a lesion. If a lesion is found the UvrA subunits dissociate and the UvrB-DNA preincision complex is formed. This complex is subsequently bound by UvrC and the second UvrB is released. If no lesion is found, the DNA wraps around the other UvrB subunit that will check the other stand for damage. This is UvrABC system protein B from Bacillus subtilis (strain 168).